A 282-amino-acid chain; its full sequence is Putative glycosyltransferase HI_0765 (282 aa).

Belongs to the glycosyltransferase 25 family.

The sequence is that of Putative glycosyltransferase HI_0765 from Haemophilus influenzae (strain ATCC 51907 / DSM 11121 / KW20 / Rd).